A 521-amino-acid polypeptide reads, in one-letter code: GMP synthase [glutamine-hydrolyzing] (521 aa).

Residues 5 to 203 form the Glutamine amidotransferase type-1 domain; the sequence is KILILDFGSQ…VHEICGCGND (199 aa). The active-site Nucleophile is the cysteine 82. Active-site residues include histidine 177 and glutamate 179. Positions 204 to 396 constitute a GMPS ATP-PPase domain; that stretch reads WNMPDYISEA…LGLPHDMVYR (193 aa). 231-237 contacts ATP; that stretch reads SGGVDSS.

Homodimer.

The enzyme catalyses XMP + L-glutamine + ATP + H2O = GMP + L-glutamate + AMP + diphosphate + 2 H(+). It functions in the pathway purine metabolism; GMP biosynthesis; GMP from XMP (L-Gln route): step 1/1. Functionally, catalyzes the synthesis of GMP from XMP. The polypeptide is GMP synthase [glutamine-hydrolyzing] (Azoarcus sp. (strain BH72)).